The chain runs to 406 residues: MGPSAPLLLLFFLSWTGPLQGQQHHLVEYMERRLAALEERLAQCQDQSSRLAAELRDFKNKMLPLLEVAEKERETLRTEADSISGRVDRLEREVDYLETQNPALPCVELDEKVTGGPGAKGKGRRNEKYDMVTDCSYTVAQVRSMKILKRFGGSAGLWTKDPLGPAEKIYVLDGTQNDTAFVFPRLRDFTLAMAARKASRIRVPFPWVGTGQLVYGGFLYYARRPPGGPGGGGELENTLQLIKFHLANRTVVDSSVFPAESLIPPYGLTADTYIDLAADEEGLWAVYATRDDDRHLCLAKLDPQTLDTEQQWDTPCPRENAEAAFVICGTLYVVYNTRPASRARIQCSFDASGTLAPERAALSYFPRRYGAHASLRYNPRERQLYAWDDGYQIVYKLEMKKKEEEV.

The N-terminal stretch at M1–G21 is a signal peptide. A coiled-coil region spans residues H25–N101. An Olfactomedin-like domain is found at D134–K401. A disulfide bridge connects residues C135 and C328. Residues N177 and N248 are each glycosylated (N-linked (GlcNAc...) asparagine).

Belongs to the OLFML3 family.

The protein resides in the secreted. In terms of biological role, secreted scaffold protein that plays an essential role in dorsoventral patterning during early development. Stabilizes axial formation by restricting chordin (CHRD) activity on the dorsal side. Acts by facilitating the association between the tolloid proteases and their substrate chordin (CHRD), leading to enhance chordin (CHRD) degradation. May have matrix-related function involved in placental and embryonic development, or play a similar role in other physiological processes. In Mus musculus (Mouse), this protein is Olfactomedin-like protein 3 (Olfml3).